The sequence spans 1012 residues: MDFFNPFIDPTRGGPRNTVRQPTPSQSPTVPSETRVCRLIPACFQTPGRPGVVAVDTTFPPTYFQGPKRGEVFAGETGSIWKTRRGQARNAPMSHLIFHVYDIVETTYTADRCEDVPFSFQTDIIPSGTVLKLLGRTLDGASVCVNVFRQRCYFYTLAPQGVNLTHVLQQALQAGFGRASCGFSTEPVRKKILRAYDTQQYAVQKITLSSSPMMRTLSDRLTTCGCEVFESNVDAIRRFVLDHGFSTFGWYECSNPAPRTQARDSWTELEFDCSWEDLKFIPERTEWPPYTILSFDIECMGEKGFPNATQDEDMIIQISCVLHTVGNDKPYTRMLLGLGTCDPLPGVEVFEFPSEYDMLAAFLSMLRDYNVEFITGYNIANFDLPYIIARATQVYDFKLQDFTKIKTGSVFEVHQPRGGSDGGNFMRSQSKVKISGIVPIDMYQVCREKLSLSDYKLDTVAKQCLGRQKDDISYKDIPPLFKSGPDGRAKVGNYCVIDSVLVMDLLLRFQTHVEISEIAKLAKIPTRRVLTDGQQIRVFSCLLEAAATEGYILPVPKGDAVSGYQGATVISPSPGFYDDPVLVVDFASLYPSIIQAHNLCYSTLIPGDSLHLHPHLSPDDYETFVLSGGPVHFVKKHKRESLLAKLLTVWLAKRKEIRKTLASCTDPALKTILDKQQLAIKVTCNAVYGFTGVASGILPCLNIAETVTLQGRKMLERSQAFVEAISPERLAGLLRRPVDVSPDARFKVIYGDTDSLFICCMGFNMDSVSDFAEELASITTNTLFRSPIKLEAEKIFKCLLLLTKKRYVGVLSDDKVLMKGVDLIRKTACRFVQEKSSQVLDLILREPSVKAAAKLISGQATDWVYREGLPEGFVKIIQVLNASHRELCERSVPVDKLTFTTELSRPLADYKTQNLPHLTVYQKLQARQEELPQIHDRIPYVFVDAPGSLRSELAEHPEYVKQHGLRVAVDLYFDKLVHAVANIIQCLFQNNTSATVAILYNFLDIPVTFPTP.

The segment at 1-31 (MDFFNPFIDPTRGGPRNTVRQPTPSQSPTVP) is disordered. Residues 21–31 (QPTPSQSPTVP) show a composition bias toward low complexity.

The protein belongs to the DNA polymerase type-B family. Forms a complex with the ssDNA-binding protein, the DNA polymerase processivity factor, and the alkaline exonuclease. Interacts with the putative helicase-primase complex subunit; this interaction may coordinate leading and lagging strand DNA synthesis at the replication fork.

The protein resides in the host nucleus. It catalyses the reaction DNA(n) + a 2'-deoxyribonucleoside 5'-triphosphate = DNA(n+1) + diphosphate. The catalysed reaction is Endonucleolytic cleavage to 5'-phosphomonoester.. In terms of biological role, replicates viral genomic DNA. The replication complex is composed of six viral proteins: the DNA polymerase, processivity factor, primase, primase-associated factor, helicase, and ssDNA-binding protein. Additionally, the polymerase contains an intrinsic ribonuclease H (RNase H) activity that specifically degrades RNA/DNA heteroduplexes or duplex DNA substrates in the 5' to 3' direction. Therefore, it can catalyze the excision of the RNA primers that initiate the synthesis of Okazaki fragments at a replication fork during viral DNA replication. This is DNA polymerase catalytic subunit (ORF9) from Human herpesvirus 8 type P (isolate GK18) (HHV-8).